The chain runs to 387 residues: LL-diaminopimelate aminotransferase (387 aa).

Residues tyrosine 14 and glycine 39 each coordinate substrate. Pyridoxal 5'-phosphate-binding positions include tyrosine 68, 102-103, tyrosine 127, asparagine 177, tyrosine 208, and 236-238; these read SK and SLS. Residues lysine 103, tyrosine 127, and asparagine 177 each coordinate substrate. An N6-(pyridoxal phosphate)lysine modification is found at lysine 239. Arginine 247 lines the pyridoxal 5'-phosphate pocket. Residue arginine 365 participates in substrate binding.

The protein belongs to the class-I pyridoxal-phosphate-dependent aminotransferase family. LL-diaminopimelate aminotransferase subfamily. As to quaternary structure, homodimer. The cofactor is pyridoxal 5'-phosphate.

The enzyme catalyses (2S,6S)-2,6-diaminopimelate + 2-oxoglutarate = (S)-2,3,4,5-tetrahydrodipicolinate + L-glutamate + H2O + H(+). It participates in amino-acid biosynthesis; L-lysine biosynthesis via DAP pathway; LL-2,6-diaminopimelate from (S)-tetrahydrodipicolinate (aminotransferase route): step 1/1. In terms of biological role, involved in the synthesis of meso-diaminopimelate (m-DAP or DL-DAP), required for both lysine and peptidoglycan biosynthesis. Catalyzes the direct conversion of tetrahydrodipicolinate to LL-diaminopimelate. This Aquifex aeolicus (strain VF5) protein is LL-diaminopimelate aminotransferase.